The chain runs to 130 residues: UPF0102 protein BT_1882 (130 aa).

This sequence belongs to the UPF0102 family.

The chain is UPF0102 protein BT_1882 from Bartonella tribocorum (strain CIP 105476 / IBS 506).